The sequence spans 258 residues: Undecaprenyl-diphosphatase (258 aa).

8 consecutive transmembrane segments (helical) span residues 14 to 34 (AAGE…PWLL), 39 to 59 (QGLT…LIYF), 79 to 99 (GKIL…GVLF), 106 to 126 (VFRS…ILHL), 136 to 156 (VALN…ALMP), 176 to 196 (AESA…AAVL), 209 to 229 (AFIA…KFLM), and 237 to 257 (FNIF…TALM).

This sequence belongs to the UppP family.

It is found in the cell membrane. It catalyses the reaction di-trans,octa-cis-undecaprenyl diphosphate + H2O = di-trans,octa-cis-undecaprenyl phosphate + phosphate + H(+). Catalyzes the dephosphorylation of undecaprenyl diphosphate (UPP). Confers resistance to bacitracin. This Elusimicrobium minutum (strain Pei191) protein is Undecaprenyl-diphosphatase.